The sequence spans 286 residues: Polyamine aminopropyltransferase (286 aa).

The PABS domain maps to 5 to 238 (TMWHETLHDQ…GIMTFAWATN (234 aa)). Gln-33 is an S-methyl-5'-thioadenosine binding site. Spermidine is bound by residues His-64 and Asp-88. S-methyl-5'-thioadenosine contacts are provided by residues Glu-108 and 140-141 (DG). Asp-158 (proton acceptor) is an active-site residue. Position 158-161 (158-161 (DCTD)) interacts with spermidine. S-methyl-5'-thioadenosine is bound at residue Pro-165.

It belongs to the spermidine/spermine synthase family. As to quaternary structure, homodimer or homotetramer.

The protein localises to the cytoplasm. It catalyses the reaction S-adenosyl 3-(methylsulfanyl)propylamine + putrescine = S-methyl-5'-thioadenosine + spermidine + H(+). It participates in amine and polyamine biosynthesis; spermidine biosynthesis; spermidine from putrescine: step 1/1. Functionally, catalyzes the irreversible transfer of a propylamine group from the amino donor S-adenosylmethioninamine (decarboxy-AdoMet) to putrescine (1,4-diaminobutane) to yield spermidine. This is Polyamine aminopropyltransferase from Salmonella paratyphi B (strain ATCC BAA-1250 / SPB7).